Reading from the N-terminus, the 474-residue chain is Siroheme synthase (474 aa).

The precorrin-2 dehydrogenase /sirohydrochlorin ferrochelatase stretch occupies residues 1 to 203; that stretch reads MKLFPLFADL…QRPEEAERLL (203 aa). Residues 22-23 and 43-44 each bind NAD(+); these read EI and PA. Serine 128 is subject to Phosphoserine. The segment at 216-474 is uroporphyrinogen-III C-methyltransferase; that stretch reads GSVVLVGAGP…QRPAPAALAA (259 aa). Residue proline 225 coordinates S-adenosyl-L-methionine. Residue aspartate 248 is the Proton acceptor of the active site. Lysine 270 acts as the Proton donor in catalysis. Residues 302–304, isoleucine 307, 332–333, methionine 384, and glycine 413 each bind S-adenosyl-L-methionine; these read GGD and TA.

It in the N-terminal section; belongs to the precorrin-2 dehydrogenase / sirohydrochlorin ferrochelatase family. This sequence in the C-terminal section; belongs to the precorrin methyltransferase family.

It catalyses the reaction uroporphyrinogen III + 2 S-adenosyl-L-methionine = precorrin-2 + 2 S-adenosyl-L-homocysteine + H(+). The enzyme catalyses precorrin-2 + NAD(+) = sirohydrochlorin + NADH + 2 H(+). The catalysed reaction is siroheme + 2 H(+) = sirohydrochlorin + Fe(2+). The protein operates within cofactor biosynthesis; adenosylcobalamin biosynthesis; precorrin-2 from uroporphyrinogen III: step 1/1. It functions in the pathway cofactor biosynthesis; adenosylcobalamin biosynthesis; sirohydrochlorin from precorrin-2: step 1/1. It participates in porphyrin-containing compound metabolism; siroheme biosynthesis; precorrin-2 from uroporphyrinogen III: step 1/1. Its pathway is porphyrin-containing compound metabolism; siroheme biosynthesis; siroheme from sirohydrochlorin: step 1/1. The protein operates within porphyrin-containing compound metabolism; siroheme biosynthesis; sirohydrochlorin from precorrin-2: step 1/1. In terms of biological role, multifunctional enzyme that catalyzes the SAM-dependent methylations of uroporphyrinogen III at position C-2 and C-7 to form precorrin-2 via precorrin-1. Then it catalyzes the NAD-dependent ring dehydrogenation of precorrin-2 to yield sirohydrochlorin. Finally, it catalyzes the ferrochelation of sirohydrochlorin to yield siroheme. This Bordetella petrii (strain ATCC BAA-461 / DSM 12804 / CCUG 43448) protein is Siroheme synthase.